The chain runs to 128 residues: Aspartate 1-decarboxylase (128 aa).

The Schiff-base intermediate with substrate; via pyruvic acid role is filled by S25. Pyruvic acid (Ser) is present on S25. T57 lines the substrate pocket. Y58 (proton donor) is an active-site residue. G73 to A75 is a binding site for substrate.

The protein belongs to the PanD family. In terms of assembly, heterooctamer of four alpha and four beta subunits. Pyruvate is required as a cofactor. In terms of processing, is synthesized initially as an inactive proenzyme, which is activated by self-cleavage at a specific serine bond to produce a beta-subunit with a hydroxyl group at its C-terminus and an alpha-subunit with a pyruvoyl group at its N-terminus.

It localises to the cytoplasm. The enzyme catalyses L-aspartate + H(+) = beta-alanine + CO2. It functions in the pathway cofactor biosynthesis; (R)-pantothenate biosynthesis; beta-alanine from L-aspartate: step 1/1. Catalyzes the pyruvoyl-dependent decarboxylation of aspartate to produce beta-alanine. The protein is Aspartate 1-decarboxylase of Moorella thermoacetica (strain ATCC 39073 / JCM 9320).